A 396-amino-acid polypeptide reads, in one-letter code: Elongation factor Tu (396 aa).

Residues K10–E206 enclose the tr-type G domain. Residues G19 to T26 are G1. G19–T26 contacts GTP. T26 contributes to the Mg(2+) binding site. A G2 region spans residues G60 to S64. The tract at residues D81–G84 is G3. Residues D81–H85 and N136–D139 each bind GTP. The tract at residues N136–D139 is G4. The interval S174–L176 is G5.

Belongs to the TRAFAC class translation factor GTPase superfamily. Classic translation factor GTPase family. EF-Tu/EF-1A subfamily. As to quaternary structure, monomer.

It is found in the cytoplasm. It catalyses the reaction GTP + H2O = GDP + phosphate + H(+). Its function is as follows. GTP hydrolase that promotes the GTP-dependent binding of aminoacyl-tRNA to the A-site of ribosomes during protein biosynthesis. This chain is Elongation factor Tu, found in Afipia carboxidovorans (strain ATCC 49405 / DSM 1227 / KCTC 32145 / OM5) (Oligotropha carboxidovorans).